Reading from the N-terminus, the 471-residue chain is Ubiquitin-conjugating enzyme E2 variant 3 (471 aa).

One can recognise a UEV domain in the interval 2–145 (EFDCEGLRRL…QEELPMYSLS (144 aa)). 191 to 219 (GELGIACTLAISAKGIADRLVLLDLSEGT) contributes to the NAD(+) binding site.

In the N-terminal section; belongs to the ubiquitin-conjugating enzyme family. UEV subfamily. The protein in the C-terminal section; belongs to the LDH/MDH superfamily. As to quaternary structure, homodimer. As to expression, colon, colon carcinoma cell lines, normal cervical epithelium, carcinomas of the uterine cervix and peripheral blood leukocytes.

Its function is as follows. Possible negative regulator of polyubiquitination. The sequence is that of Ubiquitin-conjugating enzyme E2 variant 3 from Homo sapiens (Human).